We begin with the raw amino-acid sequence, 885 residues long: Lon protease homolog 2, peroxisomal (885 aa).

One can recognise a Lon N-terminal domain in the interval 12-256 (LAVLPFRNKV…KATELVDRHL (245 aa)). The tract at residues 70–104 (LLSPGVGSDSGEGGSKVGGSAVESSKQDTKNGKEP) is disordered. Residues 77–86 (SDSGEGGSKV) are compositionally biased toward gly residues. The span at 94-104 (SKQDTKNGKEP) shows a compositional bias: basic and acidic residues. Residue 409–416 (GPPGVGKT) coordinates ATP. Residues 690 to 875 (VASPGVSVGL…EEVLDHAFEG (186 aa)) enclose the Lon proteolytic domain. Residues S781 and K824 contribute to the active site. A Microbody targeting signal motif is present at residues 883 to 885 (SKL).

Belongs to the peptidase S16 family.

Its subcellular location is the peroxisome matrix. It carries out the reaction Hydrolysis of proteins in presence of ATP.. Functionally, ATP-dependent serine protease that mediates the selective degradation of misfolded and unassembled polypeptides in the peroxisomal matrix. Necessary for type 2 peroxisome targeting signal (PTS2)-containing protein processing and facilitates peroxisome matrix protein import. The chain is Lon protease homolog 2, peroxisomal (LON1) from Zea mays (Maize).